The sequence spans 118 residues: D-dopachrome decarboxylase (118 aa).

An N-acetylproline modification is found at Pro2.

Belongs to the MIF family. Homotrimer.

It localises to the cytoplasm. The enzyme catalyses D-dopachrome + H(+) = 5,6-dihydroxyindole + CO2. Its function is as follows. Tautomerization of D-dopachrome with decarboxylation to give 5,6-dihydroxyindole (DHI). This Gallus gallus (Chicken) protein is D-dopachrome decarboxylase (DDT).